The chain runs to 73 residues: MVIMKKHVKRIVKKYLGSKKAESEEEDILPDWIVKVKNEIENITYEEYVKDVDKFFNEVKKKGIEKVLFDDIK.

This is an uncharacterized protein from Methanocaldococcus jannaschii (strain ATCC 43067 / DSM 2661 / JAL-1 / JCM 10045 / NBRC 100440) (Methanococcus jannaschii).